Reading from the N-terminus, the 360-residue chain is MLYWLTNLSDGGDFFNLFRYITFRAGGAFFTALLFGFFFGRPLIDLLRRKQKKGQPIRDDGPENHFSKAGTPTMGGLLILAALTIGTLLWARLDNGYVWIVLLVTLGFAAIGFADDYAKVTKQHHAGLSGKVRLLIGLCIAAAAGAAAAWLHPAALSGELALPFFKDALINLGLLYVPFTVLVILGAANAVNLTDGLDGLAIMPVMIAAASFSVIAYMVGNANFANYLGVHFVPGTGELAVFVAALIGGGLGFLWYNAPPAAVFMGDTGSLALGGALGAIAVVTKHEIVLAIVGGLFVVEALSVIIQVLYFKRTGKRVFLMAPIHHHFEKKGWGEAQIVIRFWIIALILALIGLATLKLR.

Transmembrane regions (helical) follow at residues 20 to 40 (YITF…FFFG), 71 to 91 (TPTM…LLWA), 93 to 113 (LDNG…AIGF), 134 to 154 (LLIG…LHPA), 168 to 188 (ALIN…LGAA), 199 to 219 (GLAI…AYMV), 239 to 259 (LAVF…YNAP), 263 to 283 (VFMG…IAVV), 288 to 308 (IVLA…IIQV), and 337 to 357 (QIVI…LATL).

Belongs to the glycosyltransferase 4 family. MraY subfamily. Requires Mg(2+) as cofactor.

It localises to the cell inner membrane. It carries out the reaction UDP-N-acetyl-alpha-D-muramoyl-L-alanyl-gamma-D-glutamyl-meso-2,6-diaminopimeloyl-D-alanyl-D-alanine + di-trans,octa-cis-undecaprenyl phosphate = di-trans,octa-cis-undecaprenyl diphospho-N-acetyl-alpha-D-muramoyl-L-alanyl-D-glutamyl-meso-2,6-diaminopimeloyl-D-alanyl-D-alanine + UMP. It functions in the pathway cell wall biogenesis; peptidoglycan biosynthesis. Functionally, catalyzes the initial step of the lipid cycle reactions in the biosynthesis of the cell wall peptidoglycan: transfers peptidoglycan precursor phospho-MurNAc-pentapeptide from UDP-MurNAc-pentapeptide onto the lipid carrier undecaprenyl phosphate, yielding undecaprenyl-pyrophosphoryl-MurNAc-pentapeptide, known as lipid I. This Paracoccus denitrificans (strain Pd 1222) protein is Phospho-N-acetylmuramoyl-pentapeptide-transferase.